Reading from the N-terminus, the 242-residue chain is Ribonuclease 3 2 (242 aa).

One can recognise an RNase III domain in the interval Leu-12–Ser-137. Glu-51 serves as a coordination point for Mg(2+). Residue Asp-55 is part of the active site. Positions 123 and 126 each coordinate Mg(2+). The active site involves Glu-126. The DRBM domain occupies Asn-165–Pro-235.

Belongs to the ribonuclease III family. Homodimer. Mg(2+) serves as cofactor.

The protein localises to the cytoplasm. It carries out the reaction Endonucleolytic cleavage to 5'-phosphomonoester.. Functionally, digests double-stranded RNA. Involved in the processing of primary rRNA transcript to yield the immediate precursors to the large and small rRNAs (23S and 16S). Processes some mRNAs, and tRNAs when they are encoded in the rRNA operon. Processes pre-crRNA and tracrRNA of type II CRISPR loci if present in the organism. This chain is Ribonuclease 3 2 (rnc2), found in Nostoc sp. (strain PCC 7120 / SAG 25.82 / UTEX 2576).